The sequence spans 274 residues: Pyrogallol hydroxytransferase small subunit (274 aa).

Residues cysteine 13, cysteine 16, cysteine 19, cysteine 23, cysteine 68, cysteine 71, cysteine 76, cysteine 109, cysteine 126, cysteine 129, cysteine 145, and cysteine 149 each coordinate [4Fe-4S] cluster.

As to quaternary structure, heterodimer of a large and a small subunit. [4Fe-4S] cluster serves as cofactor.

The catalysed reaction is 1,2,3,5-tetrahydroxybenzene + 1,2,3-trihydroxybenzene = 1,2,3,5-tetrahydroxybenzene + 1,3,5-trihydroxybenzene. Isomerization of pyrogallol to phloroglucin. The polypeptide is Pyrogallol hydroxytransferase small subunit (bthL) (Pelobacter acidigallici).